A 165-amino-acid polypeptide reads, in one-letter code: E3 ubiquitin-protein ligase RNF181 (165 aa).

The RING-type; atypical zinc finger occupies 88 to 129; the sequence is CPVCLLEFEAEETVIEMPCHHLFHSNCILPWLSKTNSCPLCR. Positions 136-165 are disordered; sequence DDSYEEHKKDKARRQQQQHRLENLHGAMYT. Position 165 is a phosphothreonine (Thr-165).

The protein belongs to the RNF181 family. As to quaternary structure, directly interacts with ITGA2B and, as a result, with integrin ITGA2B/ITGB3. There is no evidence that integrin ITGA2B/ITGB3 is an endogenous substrate for RNF181-directed ubiquitination. Post-translationally, auto-ubiquitinated as part of the enzymatic reaction.

It catalyses the reaction S-ubiquitinyl-[E2 ubiquitin-conjugating enzyme]-L-cysteine + [acceptor protein]-L-lysine = [E2 ubiquitin-conjugating enzyme]-L-cysteine + N(6)-ubiquitinyl-[acceptor protein]-L-lysine.. The protein operates within protein modification; protein ubiquitination. Functionally, E3 ubiquitin-protein ligase which accepts ubiquitin from an E2 ubiquitin-conjugating enzyme in the form of a thioester and then directly transfers the ubiquitin to targeted substrates. Catalyzes monoubiquitination of 26S proteasome subunit PSMC2/RPT1. The protein is E3 ubiquitin-protein ligase RNF181 of Mus musculus (Mouse).